A 198-amino-acid chain; its full sequence is Dephospho-CoA kinase (198 aa).

The DPCK domain maps to 3–198 (VVGLTGGIGA…HRRYSLLAAA (196 aa)). 11–16 (GAGKST) lines the ATP pocket.

It belongs to the CoaE family.

Its subcellular location is the cytoplasm. It carries out the reaction 3'-dephospho-CoA + ATP = ADP + CoA + H(+). It participates in cofactor biosynthesis; coenzyme A biosynthesis; CoA from (R)-pantothenate: step 5/5. Functionally, catalyzes the phosphorylation of the 3'-hydroxyl group of dephosphocoenzyme A to form coenzyme A. The protein is Dephospho-CoA kinase of Methylococcus capsulatus (strain ATCC 33009 / NCIMB 11132 / Bath).